The chain runs to 236 residues: Cell division protein FtsQ (236 aa).

Residues 1-14 are Cytoplasmic-facing; sequence MWDNHQALNQVADW. The chain crosses the membrane as a helical span at residues 15–37; sequence LFTLAGLTTIYLMVQWTIHLPLL. The POTRA domain maps to 37-111; that stretch reads LPLKEVHIRS…NGLDVVVEEH (75 aa). The Periplasmic segment spans residues 38-236; it reads PLKEVHIRSN…VSGFAARGTR (199 aa).

Belongs to the FtsQ/DivIB family. FtsQ subfamily. In terms of assembly, part of a complex composed of FtsB, FtsL and FtsQ.

It localises to the cell inner membrane. Functionally, essential cell division protein. May link together the upstream cell division proteins, which are predominantly cytoplasmic, with the downstream cell division proteins, which are predominantly periplasmic. May control correct divisome assembly. The sequence is that of Cell division protein FtsQ from Nitrosospira multiformis (strain ATCC 25196 / NCIMB 11849 / C 71).